The following is a 101-amino-acid chain: Apolipoprotein C-II (101 aa).

The signal sequence occupies residues 1-22; the sequence is MGIRYLLVLVLVLLVLGCEVQG. Positions 23–28 are excised as a propeptide; sequence AHMPQQ. Residues 66–74 form a lipid binding region; the sequence is TMDEKIREI. Positions 78–101 are lipoprotein lipase cofactor; that stretch reads STAAVSTYAGIFTDQLLSMLKGDQ.

This sequence belongs to the apolipoprotein C2 family. In terms of processing, proapolipoprotein C-II is synthesized as a sialic acid containing glycoprotein which is subsequently desialylated prior to its proteolytic processing. Proapolipoprotein C-II, the major form found in plasma undergoes proteolytic cleavage of its N-terminal hexapeptide to generate apolipoprotein C-II, which occurs as the minor form in plasma.

The protein resides in the secreted. Its function is as follows. Component of chylomicrons, very low-density lipoproteins (VLDL), low-density lipoproteins (LDL), and high-density lipoproteins (HDL) in plasma. Plays an important role in lipoprotein metabolism as an activator of lipoprotein lipase. Both proapolipoprotein C-II and apolipoprotein C-II can activate lipoprotein lipase. This chain is Apolipoprotein C-II (APOC2), found in Neomonachus schauinslandi (Hawaiian monk seal).